A 185-amino-acid chain; its full sequence is Urease accessory protein UreE (185 aa).

Residues 153 to 185 form a disordered region; sequence LRANSAQGHGHSHSHSHDHHGYHHHGDGHWHKH. Basic residues predominate over residues 162-175; sequence GHSHSHSHDHHGYH. A compositionally biased stretch (basic and acidic residues) spans 176 to 185; the sequence is HHGDGHWHKH.

It belongs to the UreE family.

It is found in the cytoplasm. In terms of biological role, involved in urease metallocenter assembly. Binds nickel. Probably functions as a nickel donor during metallocenter assembly. This chain is Urease accessory protein UreE, found in Haemophilus influenzae (strain PittEE).